Here is a 137-residue protein sequence, read N- to C-terminus: uncharacterized protein (137 aa).

2 helical membrane-spanning segments follow: residues 26-42 (CSLCILSMAISTSFFAM) and 52-69 (ASIPIYPLSLTFLCGSIL).

Its subcellular location is the membrane. This is an uncharacterized protein from Saccharomyces cerevisiae (strain ATCC 204508 / S288c) (Baker's yeast).